The following is a 458-amino-acid chain: Cysteine--tRNA ligase (458 aa).

C29 contacts Zn(2+). The 'HIGH' region motif lies at 31–41; that stretch reads PTVYDNPHIGN. Residues C214, H239, and E243 each contribute to the Zn(2+) site. The 'KMSKS' region motif lies at 272–276; that stretch reads KMSKS. K275 contributes to the ATP binding site.

It belongs to the class-I aminoacyl-tRNA synthetase family. As to quaternary structure, monomer. It depends on Zn(2+) as a cofactor.

The protein localises to the cytoplasm. It catalyses the reaction tRNA(Cys) + L-cysteine + ATP = L-cysteinyl-tRNA(Cys) + AMP + diphosphate. This is Cysteine--tRNA ligase from Rickettsia bellii (strain OSU 85-389).